The sequence spans 1508 residues: Pleiotropic ABC efflux transporter of multiple drugs CDR1 (1508 aa).

The tract at residues 1–30 is disordered; that stretch reads MSEKPFVDAPPPEDGVAHQVSPHDNGSLSE. The Cytoplasmic portion of the chain corresponds to 1-524; the sequence is MSEKPFVDAP…NFLRMKGDPS (524 aa). The ABC transporter 1 domain occupies 165 to 415; it reads DYWHDMRKID…FLDMGYECPQ (251 aa). A helical membrane pass occupies residues 525–545; that stretch reads IVIFSIFGQGVMGLILSSVFY. Over 546–559 the chain is Extracellular; it reads NLQPTTGSFYYRGA. The chain crosses the membrane as a helical span at residues 560–580; sequence AMFFAVLFNAFASLLEIMSLF. At 581 to 608 the chain is on the cytoplasmic side; that stretch reads EARPIVEKHKKYALYRPSADALASIISE. Residues 609–629 traverse the membrane as a helical segment; that stretch reads LPVKLCMSTCFNFSFYFMVHF. Residues 630 to 633 are Extracellular-facing; it reads RRDP. The chain crosses the membrane as a helical span at residues 634–654; it reads GRFFFYWLFCGLCTLCMSHMF. Residues 655 to 673 lie on the Cytoplasmic side of the membrane; the sequence is RSLGAVSTSLAAAMTPATS. A helical transmembrane segment spans residues 674–694; that stretch reads VLLAMVIFTGFVIPIPSMLGW. Residues 695 to 775 are Extracellular-facing; the sequence is CRWIQYINPV…EYVNAHKWRN (81 aa). Residues 776 to 796 form a helical membrane-spanning segment; that stretch reads LGIVVAYIVVFLGVYIALTEF. Residues 797–1203 are Cytoplasmic-facing; the sequence is NKGAMQKGEI…TFQQYWRSPG (407 aa). The segment at 839–860 is disordered; the sequence is KISYSDAMEKDSGESSTSDDKL. Residues 845–860 are compositionally biased toward basic and acidic residues; it reads AMEKDSGESSTSDDKL. The ABC transporter 2 domain maps to 867–1110; that stretch reads FHWKDLTYQV…GLIDYFEKHG (244 aa). An ATP-binding site is contributed by 903–910; it reads GASGAGKT. A helical transmembrane segment spans residues 1204–1224; sequence YIYSKFFLVITASLFNGFAFF. Over 1225–1239 the chain is Extracellular; it reads HSGTSQQGLQNQMFS. Residues 1240-1260 form a helical membrane-spanning segment; the sequence is MFMFYMPLQTLIQQMLPYYVM. The Cytoplasmic segment spans residues 1261-1288; that stretch reads QREIYEVREAPSRTFSWFAFIASQITTE. The chain crosses the membrane as a helical span at residues 1289–1309; sequence IPFQVVLGTVAFFCWYYPVGL. At 1310-1326 the chain is on the extracellular side; that stretch reads YQNATPTDTVHERGALM. A helical membrane pass occupies residues 1327–1347; that stretch reads WLLVTAFYVYTISLGQMVVAF. At 1348 to 1362 the chain is on the cytoplasmic side; it reads MEIADNAANMVNLMF. The helical transmembrane segment at 1363-1383 threads the bilayer; that stretch reads IMCLNFCGVLATPEALPGFWI. The Extracellular portion of the chain corresponds to 1384-1475; sequence FMYRCNPFTY…HAVYSERWRN (92 aa). A helical transmembrane segment spans residues 1476-1496; that stretch reads FGIFIAFIAINMIGTIFFYWL. At 1497-1508 the chain is on the cytoplasmic side; the sequence is ARVPKSSKSKNH.

It belongs to the ABC transporter superfamily.

The protein resides in the cell membrane. It carries out the reaction fluconazole(in) + ATP + H2O = fluconazole(out) + ADP + phosphate + H(+). The enzyme catalyses itraconazole(in) + ATP + H2O = itraconazole(out) + ADP + phosphate + H(+). The catalysed reaction is voriconazole(in) + ATP + H2O = voriconazole(out) + ADP + phosphate + H(+). The bis-benzodioxolylindolinone azoffluxin acts as an inhibitor of the transporter activity. Clorgyline analogs M19 and M25 inhibit the transcporter activity by uncoupling CDR1 ATPase activity from the active transport of substrates. Activity is also inhibited by beauvericin and oligomycin. Functionally, pleiotropic ABC efflux transporter that confers resistance to numerous chemicals including itraconazole, fluconazole, voriconazole and posaconazole. This chain is Pleiotropic ABC efflux transporter of multiple drugs CDR1, found in Candidozyma auris (Yeast).